The chain runs to 335 residues: Prepilin leader peptidase/N-methyltransferase (335 aa).

A helical membrane pass occupies residues 13–33 (LFAVFLFVLGLCVGSFLNVVI). Zn(2+) is bound by residues Cys49, Cys52, Cys74, and Cys77. 5 helical membrane passes run 105-125 (WTYE…LAFI), 131-151 (ILPL…AFPL), 206-226 (LLGV…LMLL), 258-278 (PGLP…VQPI), and 299-319 (IPFG…GPWL).

Belongs to the peptidase A24 family. The cofactor is Zn(2+).

The protein localises to the cell inner membrane. The enzyme catalyses Typically cleaves a -Gly-|-Phe- bond to release an N-terminal, basic peptide of 5-8 residues from type IV prepilin, and then N-methylates the new N-terminal amino group, the methyl donor being S-adenosyl-L-methionine.. Functionally, plays an essential role in type IV pili and type II pseudopili formation by proteolytically removing the leader sequence from substrate proteins and subsequently monomethylating the alpha-amino group of the newly exposed N-terminal phenylalanine. The protein is Prepilin leader peptidase/N-methyltransferase (pilD) of Myxococcus xanthus (strain DK1622).